We begin with the raw amino-acid sequence, 284 residues long: Acetyl-coenzyme A carboxylase carboxyl transferase subunit beta (284 aa).

The region spanning 24–284 (GLWYKSPTGK…LDLILNNEVR (261 aa)) is the CoA carboxyltransferase N-terminal domain.

It belongs to the AccD/PCCB family. Acetyl-CoA carboxylase is a heterohexamer composed of biotin carboxyl carrier protein (AccB), biotin carboxylase (AccC) and two subunits each of ACCase subunit alpha (AccA) and ACCase subunit beta (AccD).

It is found in the cytoplasm. It catalyses the reaction N(6)-carboxybiotinyl-L-lysyl-[protein] + acetyl-CoA = N(6)-biotinyl-L-lysyl-[protein] + malonyl-CoA. Its pathway is lipid metabolism; malonyl-CoA biosynthesis; malonyl-CoA from acetyl-CoA: step 1/1. Its function is as follows. Component of the acetyl coenzyme A carboxylase (ACC) complex. Biotin carboxylase (BC) catalyzes the carboxylation of biotin on its carrier protein (BCCP) and then the CO(2) group is transferred by the transcarboxylase to acetyl-CoA to form malonyl-CoA. The chain is Acetyl-coenzyme A carboxylase carboxyl transferase subunit beta from Flavobacterium psychrophilum (strain ATCC 49511 / DSM 21280 / CIP 103535 / JIP02/86).